The chain runs to 218 residues: Protein-methionine-sulfoxide reductase heme-binding subunit MsrQ (218 aa).

Transmembrane regions (helical) follow at residues 14–34, 60–80, 86–106, 121–141, and 155–175; these read AVHA…WQVW, LLLI…AVLI, LGLY…WLDL, PYIT…ITST, and LHML…WLVK.

Belongs to the MsrQ family. In terms of assembly, heterodimer of a catalytic subunit (MsrP) and a heme-binding subunit (MsrQ). The cofactor is FMN. It depends on heme b as a cofactor.

It localises to the cell inner membrane. Part of the MsrPQ system that repairs oxidized periplasmic proteins containing methionine sulfoxide residues (Met-O), using respiratory chain electrons. Thus protects these proteins from oxidative-stress damage caused by reactive species of oxygen and chlorine generated by the host defense mechanisms. MsrPQ is essential for the maintenance of envelope integrity under bleach stress, rescuing a wide series of structurally unrelated periplasmic proteins from methionine oxidation. MsrQ provides electrons for reduction to the reductase catalytic subunit MsrP, using the quinone pool of the respiratory chain. This Xanthomonas campestris pv. campestris (strain 8004) protein is Protein-methionine-sulfoxide reductase heme-binding subunit MsrQ.